The sequence spans 906 residues: Protein translocase subunit SecA (906 aa).

ATP contacts are provided by residues Q89, 107-111 (GEGKT), and D502. The segment at 829 to 898 (EAPPEPELPP…ACPCGSGKKY (70 aa)) is disordered. Residues 858–877 (WSDHQHDERNVPAAERDPAD) show a composition bias toward basic and acidic residues. Zn(2+)-binding residues include C890, C892, C901, and H902.

It belongs to the SecA family. As to quaternary structure, monomer and homodimer. Part of the essential Sec protein translocation apparatus which comprises SecA, SecYEG and auxiliary proteins SecDF-YajC and YidC. Requires Zn(2+) as cofactor.

It is found in the cell inner membrane. It localises to the cytoplasm. It carries out the reaction ATP + H2O + cellular proteinSide 1 = ADP + phosphate + cellular proteinSide 2.. In terms of biological role, part of the Sec protein translocase complex. Interacts with the SecYEG preprotein conducting channel. Has a central role in coupling the hydrolysis of ATP to the transfer of proteins into and across the cell membrane, serving both as a receptor for the preprotein-SecB complex and as an ATP-driven molecular motor driving the stepwise translocation of polypeptide chains across the membrane. The chain is Protein translocase subunit SecA from Brucella anthropi (strain ATCC 49188 / DSM 6882 / CCUG 24695 / JCM 21032 / LMG 3331 / NBRC 15819 / NCTC 12168 / Alc 37) (Ochrobactrum anthropi).